The chain runs to 341 residues: 4-hydroxy-2-oxovalerate aldolase (341 aa).

Residues 9–259 enclose the Pyruvate carboxyltransferase domain; the sequence is VRITEVCLRD…KLDIDLYKMM (251 aa). 17-18 contributes to the substrate binding site; sequence RD. Asp-18 lines the Mn(2+) pocket. His-21 functions as the Proton acceptor in the catalytic mechanism. Substrate is bound by residues Ser-171 and His-198. Mn(2+)-binding residues include His-198 and His-200. Tyr-289 provides a ligand contact to substrate.

It belongs to the 4-hydroxy-2-oxovalerate aldolase family.

The catalysed reaction is (S)-4-hydroxy-2-oxopentanoate = acetaldehyde + pyruvate. This chain is 4-hydroxy-2-oxovalerate aldolase, found in Bacillus thuringiensis (strain Al Hakam).